Consider the following 213-residue polypeptide: Orotate phosphoribosyltransferase (213 aa).

Position 26 (K26) interacts with 5-phospho-alpha-D-ribose 1-diphosphate. 34 to 35 (FF) contacts orotate. 5-phospho-alpha-D-ribose 1-diphosphate is bound by residues 72 to 73 (YK), R99, K100, K103, H105, and 124 to 132 (DDVITAGTA). Positions 128 and 156 each coordinate orotate.

The protein belongs to the purine/pyrimidine phosphoribosyltransferase family. PyrE subfamily. As to quaternary structure, homodimer. The cofactor is Mg(2+).

The catalysed reaction is orotidine 5'-phosphate + diphosphate = orotate + 5-phospho-alpha-D-ribose 1-diphosphate. It participates in pyrimidine metabolism; UMP biosynthesis via de novo pathway; UMP from orotate: step 1/2. Catalyzes the transfer of a ribosyl phosphate group from 5-phosphoribose 1-diphosphate to orotate, leading to the formation of orotidine monophosphate (OMP). The protein is Orotate phosphoribosyltransferase of Vibrio vulnificus (strain YJ016).